The chain runs to 497 residues: Glycerol kinase (497 aa).

An ADP-binding site is contributed by threonine 12. 3 residues coordinate ATP: threonine 12, threonine 13, and serine 14. Threonine 12 provides a ligand contact to sn-glycerol 3-phosphate. Arginine 16 contributes to the ADP binding site. Positions 82, 83, 132, and 239 each coordinate sn-glycerol 3-phosphate. Glycerol contacts are provided by arginine 82, glutamate 83, tyrosine 132, aspartate 239, and glutamine 240. Residues threonine 261 and glycine 303 each contribute to the ADP site. ATP is bound by residues threonine 261, glycine 303, glutamine 307, and glycine 402. Residues glycine 402 and asparagine 406 each contribute to the ADP site.

Belongs to the FGGY kinase family. In terms of assembly, homodimer.

It catalyses the reaction glycerol + ATP = sn-glycerol 3-phosphate + ADP + H(+). The protein operates within polyol metabolism; glycerol degradation via glycerol kinase pathway; sn-glycerol 3-phosphate from glycerol: step 1/1. Its function is as follows. Key enzyme in the regulation of glycerol uptake and metabolism. Catalyzes the phosphorylation of glycerol to yield sn-glycerol 3-phosphate. Can utilize other nucleoside triphosphates (GTP, CTP, UTP and ITP) as a phosphoryl donor. The sequence is that of Glycerol kinase from Thermococcus kodakarensis (strain ATCC BAA-918 / JCM 12380 / KOD1) (Pyrococcus kodakaraensis (strain KOD1)).